Consider the following 505-residue polypeptide: Cytochrome c oxidase subunit 1 (505 aa).

The chain crosses the membrane as a helical span at residues 14–34 (LLYLVFAFFGGLLGTSLSMLI). The Ca(2+) site is built by Glu37 and Gly42. The next 6 membrane-spanning stretches (helical) occupy residues 55-75 (VIIT…ALFG), 98-118 (NISF…TLVE), 143-163 (AILS…NMLV), 180-200 (LFVW…PVLA), 229-249 (LFWF…FGIV), and 261-281 (VFGL…GFIV). Residue His60 participates in Fe(II)-heme a binding. Positions 235 and 239 each coordinate Cu cation. The segment at residues 235–239 (HPEVY) is a cross-link (1'-histidyl-3'-tyrosine (His-Tyr)). O2 is bound at residue Tyr239. 2 residues coordinate Cu cation: His284 and His285. 2 consecutive transmembrane segments (helical) span residues 302 to 322 (ATMI…ATIY) and 332 to 352 (MWFA…GVVL). Positions 362 and 363 each coordinate Mg(2+). Heme a3 is bound at residue His370. Residue His372 coordinates Fe(II)-heme a. 3 helical membrane passes run 374–394 (VLSM…GNLI), 408–428 (FWLL…LGLA), and 446–466 (AVSS…ATTF).

It belongs to the heme-copper respiratory oxidase family. As to quaternary structure, component of the cytochrome c oxidase (complex IV, CIV), a multisubunit enzyme composed of a catalytic core of 3 subunits and several supernumerary subunits. The complex exists as a monomer or a dimer and forms supercomplexes (SCs) in the inner mitochondrial membrane with ubiquinol-cytochrome c oxidoreductase (cytochrome b-c1 complex, complex III, CIII). Requires heme as cofactor. It depends on Cu cation as a cofactor.

The protein resides in the mitochondrion inner membrane. The enzyme catalyses 4 Fe(II)-[cytochrome c] + O2 + 8 H(+)(in) = 4 Fe(III)-[cytochrome c] + 2 H2O + 4 H(+)(out). It functions in the pathway energy metabolism; oxidative phosphorylation. Functionally, component of the cytochrome c oxidase, the last enzyme in the mitochondrial electron transport chain which drives oxidative phosphorylation. The respiratory chain contains 3 multisubunit complexes succinate dehydrogenase (complex II, CII), ubiquinol-cytochrome c oxidoreductase (cytochrome b-c1 complex, complex III, CIII) and cytochrome c oxidase (complex IV, CIV), that cooperate to transfer electrons derived from NADH and succinate to molecular oxygen, creating an electrochemical gradient over the inner membrane that drives transmembrane transport and the ATP synthase. Cytochrome c oxidase is the component of the respiratory chain that catalyzes the reduction of oxygen to water. Electrons originating from reduced cytochrome c in the intermembrane space (IMS) are transferred via the dinuclear copper A center (CU(A)) of subunit 2 and heme A of subunit 1 to the active site in subunit 1, a binuclear center (BNC) formed by heme A3 and copper B (CU(B)). The BNC reduces molecular oxygen to 2 water molecules using 4 electrons from cytochrome c in the IMS and 4 protons from the mitochondrial matrix. The chain is Cytochrome c oxidase subunit 1 (COX1) from Chlamydomonas reinhardtii (Chlamydomonas smithii).